The chain runs to 494 residues: Catalase A (494 aa).

Polar residues predominate over residues 1–23; that stretch reads MTDRPTITTTAGAPVPDNQNSLT. The segment at 1-25 is disordered; sequence MTDRPTITTTAGAPVPDNQNSLTAG. Catalysis depends on residues histidine 55 and asparagine 127. Tyrosine 337 is a binding site for heme.

This sequence belongs to the catalase family. Requires heme as cofactor.

The protein localises to the periplasm. It carries out the reaction 2 H2O2 = O2 + 2 H2O. Decomposes hydrogen peroxide into water and oxygen; serves to protect cells from the toxic effects of hydrogen peroxide. The chain is Catalase A (katA) from Rhizobium meliloti (strain 1021) (Ensifer meliloti).